The following is a 201-amino-acid chain: Small ribosomal subunit protein eS1 (201 aa).

The protein belongs to the eukaryotic ribosomal protein eS1 family.

In Methanoregula boonei (strain DSM 21154 / JCM 14090 / 6A8), this protein is Small ribosomal subunit protein eS1.